A 319-amino-acid polypeptide reads, in one-letter code: Protease HtpX homolog (319 aa).

The next 2 helical transmembrane spans lie at 3–23 (LTVL…AWAL) and 32–52 (TGVA…QWLF). Histidine 134 is a Zn(2+) binding site. The active site involves glutamate 135. Zn(2+) is bound at residue histidine 138. 2 consecutive transmembrane segments (helical) span residues 146 to 166 (VILA…TLVW) and 182 to 202 (MALV…QLIV). A Zn(2+)-binding site is contributed by glutamate 210.

It belongs to the peptidase M48B family. The cofactor is Zn(2+).

The protein localises to the cell membrane. This chain is Protease HtpX homolog, found in Aeropyrum pernix (strain ATCC 700893 / DSM 11879 / JCM 9820 / NBRC 100138 / K1).